A 361-amino-acid polypeptide reads, in one-letter code: Peptide chain release factor 1 (361 aa).

Glutamine 236 bears the N5-methylglutamine mark. Positions 285 to 309 (NAKDSARAADRKAQVGSGDRSERIR) are enriched in basic and acidic residues. The interval 285-312 (NAKDSARAADRKAQVGSGDRSERIRTYN) is disordered.

It belongs to the prokaryotic/mitochondrial release factor family. In terms of processing, methylated by PrmC. Methylation increases the termination efficiency of RF1.

Its subcellular location is the cytoplasm. Peptide chain release factor 1 directs the termination of translation in response to the peptide chain termination codons UAG and UAA. This chain is Peptide chain release factor 1, found in Methylobacterium radiotolerans (strain ATCC 27329 / DSM 1819 / JCM 2831 / NBRC 15690 / NCIMB 10815 / 0-1).